The following is a 251-amino-acid chain: Capsid protein (251 aa).

The segment at 1–29 (MPKRDAPWRSMAGTSKVSRNANYSPRSGI) is disordered. The Bipartite nuclear localization signal signature appears at 3 to 20 (KRDAPWRSMAGTSKVSRN). The span at 12 to 25 (AGTSKVSRNANYSP) shows a compositional bias: polar residues. The Nuclear localization signal motif lies at 35-49 (KAAEWVNRPMYRKPR). The segment at 63–80 (CEGPCKVQSFEQRHDILH) is a zinc-finger region. Positions 96 to 117 (ITHRVGKRFCVKSVYILGKIWM) match the Nuclear export signal motif. The Bipartite nuclear localization signal motif lies at 195–242 (RRFWKVNNHVVYNHQEAGKYENHTENALLLYMACTHASNPVYATLKIR).

This sequence belongs to the geminiviridae capsid protein family. As to quaternary structure, homomultimer. Binds to single-stranded and double-stranded viral DNA. Interacts (via nuclear localization signals) with host importin alpha-1a.

It localises to the virion. Its subcellular location is the host nucleus. Encapsidates the viral DNA into characteristic twinned ('geminate') particles. Binds the genomic viral ssDNA and shuttles it into and out of the cell nucleus. The CP of bipartite geminiviruses is not required for cell-to-cell or systemic movement. The chain is Capsid protein from Solanum tuberosum (Potato).